The sequence spans 231 residues: Albumin-2 (231 aa).

4 Hemopexin repeats span residues 4-55 (TGYI…FKSL), 62-112 (SYGV…FPFF), 118-166 (ENGI…FPCF), and 172-223 (ESGT…WPSL). The Ca(2+) site is built by N8, D66, D122, and D176.

Monomer and homodimer.

It is found in the cytoplasm. The protein resides in the cytosol. Its function is as follows. May play a role in response to oxidative stress and polyamine biosynthesis. The sequence is that of Albumin-2 from Pisum sativum (Garden pea).